A 401-amino-acid chain; its full sequence is Aspartokinase (401 aa).

Belongs to the aspartokinase family.

The catalysed reaction is L-aspartate + ATP = 4-phospho-L-aspartate + ADP. The protein operates within amino-acid biosynthesis; L-lysine biosynthesis via DAP pathway; (S)-tetrahydrodipicolinate from L-aspartate: step 1/4. It participates in amino-acid biosynthesis; L-methionine biosynthesis via de novo pathway; L-homoserine from L-aspartate: step 1/3. Its pathway is amino-acid biosynthesis; L-threonine biosynthesis; L-threonine from L-aspartate: step 1/5. In Rickettsia conorii (strain ATCC VR-613 / Malish 7), this protein is Aspartokinase (lysC).